Consider the following 355-residue polypeptide: Peptide chain release factor 1 (355 aa).

Q229 bears the N5-methylglutamine mark. Positions 280 to 299 (LDRERSAARKGQVGSGDRSE) are disordered.

Belongs to the prokaryotic/mitochondrial release factor family. Post-translationally, methylated by PrmC. Methylation increases the termination efficiency of RF1.

The protein localises to the cytoplasm. In terms of biological role, peptide chain release factor 1 directs the termination of translation in response to the peptide chain termination codons UAG and UAA. This Parvibaculum lavamentivorans (strain DS-1 / DSM 13023 / NCIMB 13966) protein is Peptide chain release factor 1.